The primary structure comprises 908 residues: Protein translocase subunit SecA (908 aa).

Residues Gln-87, 105–109, and Asp-507 each bind ATP; that span reads GEGKT. Residues 860-898 are disordered; it reads EALGNAEESDEASDQSVKTFERAGAKVGRNDPCPCGSGK. Residues Cys-892, Cys-894, Cys-903, and His-904 each contribute to the Zn(2+) site.

This sequence belongs to the SecA family. As to quaternary structure, monomer and homodimer. Part of the essential Sec protein translocation apparatus which comprises SecA, SecYEG and auxiliary proteins SecDF-YajC and YidC. It depends on Zn(2+) as a cofactor.

It is found in the cell inner membrane. Its subcellular location is the cytoplasm. It carries out the reaction ATP + H2O + cellular proteinSide 1 = ADP + phosphate + cellular proteinSide 2.. In terms of biological role, part of the Sec protein translocase complex. Interacts with the SecYEG preprotein conducting channel. Has a central role in coupling the hydrolysis of ATP to the transfer of proteins into and across the cell membrane, serving both as a receptor for the preprotein-SecB complex and as an ATP-driven molecular motor driving the stepwise translocation of polypeptide chains across the membrane. The chain is Protein translocase subunit SecA from Methylobacillus flagellatus (strain ATCC 51484 / DSM 6875 / VKM B-1610 / KT).